The following is a 153-amino-acid chain: Large ribosomal subunit protein uL30 (153 aa).

It belongs to the universal ribosomal protein uL30 family. In terms of assembly, part of the 50S ribosomal subunit.

The polypeptide is Large ribosomal subunit protein uL30 (Methanocorpusculum labreanum (strain ATCC 43576 / DSM 4855 / Z)).